The sequence spans 304 residues: Small glutamine-rich tetratricopeptide repeat-containing protein beta (304 aa).

4 TPR repeats span residues 15 to 49 (LREQSQMDTYTSDEQESLEVAIQCLETVFKISPED), 85 to 118 (ADQLKDEGNNHMKEENYAAAVDCYTQAIELDPNN), 119 to 152 (AVYYCNRAAAQSKLGHYTDAIKDCEKAIAIDSKY), and 153 to 186 (SKAYGRMGLALTALNKFEEAVTSYQKALDLDPEN). The residue at position 131 (Lys131) is an N6-acetyllysine. Ser293, Ser295, and Ser297 each carry phosphoserine.

It belongs to the SGT family. As to quaternary structure, homooligomerize.

In terms of biological role, co-chaperone that binds directly to HSC70 and HSP70 and regulates their ATPase activity. The chain is Small glutamine-rich tetratricopeptide repeat-containing protein beta (SGTB) from Homo sapiens (Human).